The sequence spans 489 residues: NADH-quinone oxidoreductase subunit N (489 aa).

Transmembrane regions (helical) follow at residues 8–28, 35–55, 75–95, 105–125, 127–147, 159–179, 203–223, 235–255, 271–291, 303–323, 329–349, 374–394, 407–427, and 456–476; these read LIAM…MLSI, FTIA…LYYV, FFTA…YPWL, FYML…AHHL, SMFI…GYAF, YMLL…LLYA, VLAG…LFPF, PAPT…AVVM, MILG…ALTQ, VSHL…PILA, IYLA…AVAS, AVVM…LGFI, SLWW…FYYL, and LITL…QPLI.

Belongs to the complex I subunit 2 family. NDH-1 is composed of 13 different subunits. Subunits NuoA, H, J, K, L, M, N constitute the membrane sector of the complex.

It localises to the cell inner membrane. The enzyme catalyses a quinone + NADH + 5 H(+)(in) = a quinol + NAD(+) + 4 H(+)(out). In terms of biological role, NDH-1 shuttles electrons from NADH, via FMN and iron-sulfur (Fe-S) centers, to quinones in the respiratory chain. The immediate electron acceptor for the enzyme in this species is believed to be ubiquinone. Couples the redox reaction to proton translocation (for every two electrons transferred, four hydrogen ions are translocated across the cytoplasmic membrane), and thus conserves the redox energy in a proton gradient. The polypeptide is NADH-quinone oxidoreductase subunit N (Proteus mirabilis (strain HI4320)).